We begin with the raw amino-acid sequence, 684 residues long: Frizzled-8 (684 aa).

A signal peptide spans 1–27; that stretch reads MEWGYLLEVTSLLAALAVLQRSSGAAA. The Extracellular portion of the chain corresponds to 28–271; it reads ASAKELACQE…NPFFSQDERA (244 aa). Residues 30-151 form the FZ domain; the sequence is AKELACQEIT…GNPDTLCMDY (122 aa). Disulfide bonds link Cys-35–Cys-96, Cys-43–Cys-89, Cys-80–Cys-118, Cys-107–Cys-148, and Cys-111–Cys-135. Asn-49 is a glycosylation site (N-linked (GlcNAc...) asparagine). 71 to 78 is a binding site for hexadecanoate; sequence QFWPLVEI. Positions 95-100 are wnt-binding; that stretch reads ICLEDY. Positions 147–152 are wnt-binding; the sequence is LCMDYN. Asn-152 carries N-linked (GlcNAc...) asparagine glycosylation. The tract at residues 155–222 is disordered; sequence DLTTAAPSPP…KARPPGGGAA (68 aa). Residues 161–175 show a composition bias toward pro residues; sequence PSPPRRLPPPQPGEQ. Composition is skewed to low complexity over residues 176-186 and 199-222; these read PPSGSGHSRPP and GSGD…GGAA. Residues 272–292 form a helical membrane-spanning segment; the sequence is FTVFWIGLWSVLCFVSTFATV. The Cytoplasmic portion of the chain corresponds to 293–308; sequence STFLIDMERFKYPERP. Residues 309–329 traverse the membrane as a helical segment; sequence IIFLSACYLFVSVGYLVRLVA. Over 330–393 the chain is Extracellular; the sequence is GHEKVACSGG…RYETTGPALC (64 aa). The helical transmembrane segment at 394–414 threads the bilayer; it reads TVVFLLVYFFGMASSIWWVIL. The Cytoplasmic segment spans residues 415-436; it reads SLTWFLAAGMKWGNEAIAGYSQ. A helical membrane pass occupies residues 437 to 457; the sequence is YFHLAAWLVPSVKSIAVLALS. The Extracellular segment spans residues 458-480; it reads SVDGDPVAGICYVGNQSLDNLRG. Residue Asn-472 is glycosylated (N-linked (GlcNAc...) asparagine). The helical transmembrane segment at 481 to 501 threads the bilayer; that stretch reads FVLAPLVIYLFIGTMFLLAGF. Residues 502–529 are Cytoplasmic-facing; it reads VSLFRIRSVIKQQGGPTKTHKLEKLMIR. The helical transmembrane segment at 530-550 threads the bilayer; it reads LGLFTVLYTVPAAVVVACLFY. Residues 551 to 581 are Extracellular-facing; it reads EQHNRPRWEATHNCPCLRDLQPDQARRPDYA. The helical transmembrane segment at 582 to 602 threads the bilayer; sequence VFMLKYFMCLVVGITSGVWVW. Topologically, residues 603–684 are cytoplasmic; that stretch reads SGKTLESWRA…YPKQMPLSQV (82 aa). The Lys-Thr-X-X-X-Trp motif, mediates interaction with the PDZ domain of Dvl family members motif lies at 605–610; that stretch reads KTLESW. Gly residues predominate over residues 630 to 654; sequence AGGSGPGGGGPGPGGGGGHGGGGGS. The tract at residues 630–655 is disordered; sequence AGGSGPGGGGPGPGGGGGHGGGGGSL. Positions 682–684 match the PDZ-binding motif; the sequence is SQV.

The protein belongs to the G-protein coupled receptor Fz/Smo family. Component of a Wnt-signaling complex that contains a WNT protein, a FZD protein and LRP5 or LRP6. Interacts directly with LRP5 or LRP6; the interaction is promoted by Wnt-binding and signaling and inhibited by DKK1. Interacts (via the PDZ-binding motif) with GPOC (via its PDZ domain). Interacts with RSPO1 and RSPO3. Interacts with glypican GPC3. Post-translationally, ubiquitinated by ZNRF3, leading to its degradation by the proteasome.

It is found in the membrane. The protein localises to the golgi apparatus. Its subcellular location is the cell membrane. Receptor for Wnt proteins. Component of the Wnt-Fzd-LRP5-LRP6 complex that triggers beta-catenin signaling through inducing aggregation of receptor-ligand complexes into ribosome-sized signalosomes. The beta-catenin canonical signaling pathway leads to the activation of disheveled proteins, inhibition of GSK-3 kinase, nuclear accumulation of beta-catenin and activation of Wnt target genes. A second signaling pathway involving PKC and calcium fluxes has been seen for some family members, but it is not yet clear if it represents a distinct pathway or if it can be integrated in the canonical pathway, as PKC seems to be required for Wnt-mediated inactivation of GSK-3 kinase. Both pathways seem to involve interactions with G-proteins. May be involved in transduction and intercellular transmission of polarity information during tissue morphogenesis and/or in differentiated tissues. Coreceptor along with RYK of Wnt proteins, such as WNT1. In Rattus norvegicus (Rat), this protein is Frizzled-8 (Fzd8).